The following is a 66-amino-acid chain: Photosystem II reaction center protein J (66 aa).

Positions 1–23 (MSGNKSPFPDGRIPDRLPDGRPA) are disordered. The helical transmembrane segment at 37 to 57 (LWLVATAGGMAVLFVVGLFFY) threads the bilayer.

Belongs to the PsbJ family. In terms of assembly, PSII is composed of 1 copy each of membrane proteins PsbA, PsbB, PsbC, PsbD, PsbE, PsbF, PsbH, PsbI, PsbJ, PsbK, PsbL, PsbM, PsbT, PsbX, PsbY, PsbZ, Psb30/Ycf12, peripheral proteins PsbO, CyanoQ (PsbQ), PsbU, PsbV and a large number of cofactors. It forms dimeric complexes.

Its subcellular location is the cellular thylakoid membrane. One of the components of the core complex of photosystem II (PSII). PSII is a light-driven water:plastoquinone oxidoreductase that uses light energy to abstract electrons from H(2)O, generating O(2) and a proton gradient subsequently used for ATP formation. It consists of a core antenna complex that captures photons, and an electron transfer chain that converts photonic excitation into a charge separation. The sequence is that of Photosystem II reaction center protein J from Parasynechococcus marenigrum (strain WH8102).